The following is a 155-amino-acid chain: Large ribosomal subunit protein uL22c (155 aa).

Belongs to the universal ribosomal protein uL22 family. In terms of assembly, part of the 50S ribosomal subunit.

It is found in the plastid. The protein localises to the chloroplast. This protein binds specifically to 23S rRNA. Functionally, the globular domain of the protein is located near the polypeptide exit tunnel on the outside of the subunit, while an extended beta-hairpin is found that lines the wall of the exit tunnel in the center of the 70S ribosome. This Atropa belladonna (Belladonna) protein is Large ribosomal subunit protein uL22c (rpl22).